The primary structure comprises 38 residues: MKVRASVKKRSAECIIVRRKGRLYVINKKNPRFKQRQG.

It belongs to the bacterial ribosomal protein bL36 family.

The polypeptide is Large ribosomal subunit protein bL36 (Flavobacterium johnsoniae (strain ATCC 17061 / DSM 2064 / JCM 8514 / BCRC 14874 / CCUG 350202 / NBRC 14942 / NCIMB 11054 / UW101) (Cytophaga johnsonae)).